The following is a 293-amino-acid chain: ATP synthase gamma chain (293 aa).

The protein belongs to the ATPase gamma chain family. F-type ATPases have 2 components, CF(1) - the catalytic core - and CF(0) - the membrane proton channel. CF(1) has five subunits: alpha(3), beta(3), gamma(1), delta(1), epsilon(1). CF(0) has three main subunits: a, b and c.

It is found in the cell inner membrane. Produces ATP from ADP in the presence of a proton gradient across the membrane. The gamma chain is believed to be important in regulating ATPase activity and the flow of protons through the CF(0) complex. This chain is ATP synthase gamma chain, found in Psychrobacter cryohalolentis (strain ATCC BAA-1226 / DSM 17306 / VKM B-2378 / K5).